A 72-amino-acid polypeptide reads, in one-letter code: Gene 83 protein (72 aa).

This Mycobacterium phage L5 (Mycobacteriophage L5) protein is Gene 83 protein (83).